The following is a 198-amino-acid chain: MNASLRTDDVMRYQDARFKTIAAKLLPTQYLVVDDTTALTTTLGSCVAACLRDPVLKIGGMNHFLLPEGNAGDGAPARYGSYAMELLINDMLKRGAHRKRIEAKVFGGANVLKGFTSNPVGTRNAEFVRQYLQAEHIPIIAEDLCGIHPRKIWFFADTGRVVVQRLPHAHEAEVAATESAVRARLSKAPVTGGVELFE.

Belongs to the CheD family.

The enzyme catalyses L-glutaminyl-[protein] + H2O = L-glutamyl-[protein] + NH4(+). Its function is as follows. Probably deamidates glutamine residues to glutamate on methyl-accepting chemotaxis receptors (MCPs), playing an important role in chemotaxis. The chain is Probable chemoreceptor glutamine deamidase CheD from Stenotrophomonas maltophilia (strain R551-3).